We begin with the raw amino-acid sequence, 149 residues long: Small ribosomal subunit protein bS16 (149 aa).

Positions 115–149 (KLKAAKSEADAKAKAEAEAAATEEAPAEEPAAEAE) are disordered. Positions 119 to 131 (AKSEADAKAKAEA) are enriched in basic and acidic residues. The segment covering 139–149 (APAEEPAAEAE) has biased composition (acidic residues).

Belongs to the bacterial ribosomal protein bS16 family.

In Bifidobacterium adolescentis (strain ATCC 15703 / DSM 20083 / NCTC 11814 / E194a), this protein is Small ribosomal subunit protein bS16.